The chain runs to 339 residues: Zinc transporter 3 (339 aa).

The first 25 residues, 1–25 (MKTKNVKLLFFFFSVSLLLIAVVNA), serve as a signal peptide directing secretion. The Extracellular segment spans residues 26 to 54 (AEGHSHGGPKCECSHEDDHENKAGARKYK). Residues 55 to 75 (IAAIPTVLIAGIIGVLFPLLG) form a helical membrane-spanning segment. At 76 to 86 (KVFPSLRPETC) the chain is on the cytoplasmic side. A helical transmembrane segment spans residues 87-107 (FFFVTKAFAAGVILATGFMHV). The Extracellular portion of the chain corresponds to 108–123 (LPEAYEMLNSPCLTSE). A helical transmembrane segment spans residues 124 to 144 (AWEFPFTGFIAMIAAILTLSV). Residues 145–184 (DTFATSSFYKSHCKASKRVSDGETGESSVDSEKVQILRTR) lie on the Cytoplasmic side of the membrane. Residues 185-205 (VIAQVLELGIIVHSVVIGISL) traverse the membrane as a helical segment. Residues 206–216 (GASQSPDAAKA) are Extracellular-facing. The chain crosses the membrane as a helical span at residues 217–237 (LFIALMFHQCFEGLGLGGCIA). Topologically, residues 238–247 (QGKFKCLSVT) are cytoplasmic. The chain crosses the membrane as a helical span at residues 248 to 268 (IMSTFFAITTPIGIVVGMGIA). Topologically, residues 269-278 (NSYDESSPTA) are extracellular. Residues 279–299 (LIVQGVLNAASAGILIYMSLV) form a helical membrane-spanning segment. Residues 300 to 315 (DLLAADFTHPKMQSNT) lie on the Cytoplasmic side of the membrane. Residues 316–336 (GLQIMAHIALLLGAGLMSLLA) form a helical membrane-spanning segment. Over 337–339 (KWA) the chain is Extracellular.

The protein belongs to the ZIP transporter (TC 2.A.5) family. As to expression, expressed predominantly in the roots of zinc-deficient plants.

Its subcellular location is the cell membrane. Its function is as follows. Mediates zinc uptake from the rhizosphere. May also transport other divalent cations. This Arabidopsis thaliana (Mouse-ear cress) protein is Zinc transporter 3 (ZIP3).